The following is a 248-amino-acid chain: Transcription factor MYB1 (248 aa).

2 consecutive HTH myb-type domains span residues 9–61 (KEGM…LNYL) and 62–116 (RPGI…GRRV). 2 consecutive DNA-binding regions (H-T-H motif) follow at residues 37–61 (WRSL…LNYL) and 89–112 (WSLI…NTNL). The interval 118–144 (DQSHQHCRPNPTITSTKPADAPPANAN) is disordered.

The protein localises to the nucleus. In terms of biological role, transcription activator involved in the spatiotemporal regulation of flavonoid biosynthesis specifically in the corms of Montbretia. Activates the promoters of enzymes involved in the biosynthesis of the flavonol kaempferol and the flavonol-glycoside kaempferol-rhamnoside. This chain is Transcription factor MYB1, found in Crocosmia x crocosmiiflora (Montbretia).